Here is a 442-residue protein sequence, read N- to C-terminus: Septin-8 (442 aa).

The span at 1–16 shows a compositional bias: basic and acidic residues; sequence MAATDLERISNAEPEP. A disordered region spans residues 1 to 21; sequence MAATDLERISNAEPEPRSLSL. At Ala2 the chain carries N-acetylalanine. Ser10 bears the Phosphoserine mark. Residues 41–307 enclose the Septin-type G domain; the sequence is QGFSFNILCV…ELYRRCKLEE (267 aa). A G1 motif region spans residues 51–58; it reads GETGIGKS. GTP is bound by residues 51-58, Gly106, 187-195, Gly241, and Arg256; these read GETGIGKS and KADTISKSE. Positions 103 to 106 are G3 motif; the sequence is DAVG. A G4 motif region spans residues 186 to 189; that stretch reads AKAD. Residues 322-407 are a coiled coil; sequence LQETYEAKRK…FNCRKAAMEA (86 aa). Residues 411-420 show a composition bias toward polar residues; the sequence is QALHATSQQP. Positions 411-442 are disordered; that stretch reads QALHATSQQPLRKDKDKKKVGGWSSIYSVTIP.

The protein belongs to the TRAFAC class TrmE-Era-EngA-EngB-Septin-like GTPase superfamily. Septin GTPase family. Septins polymerize into heterooligomeric protein complexes that form filaments, and can associate with cellular membranes, actin filaments and microtubules. GTPase activity is required for filament formation. Interacts with SEPTIN7. Interacts with CDK14, SEPTIN4 and SEPTIN5. Interacts with VAMP2; the interaction inhibits interaction of VAMP2 with SYP. Interacts with STX1A. In terms of tissue distribution, expressed in cerebrum, hippocampus and cerebellum (at protein level). Expressed in heart (at protein level).

The protein resides in the cytoplasm. It localises to the cytoskeleton. Its subcellular location is the synapse. It is found in the cell projection. The protein localises to the axon. The protein resides in the cytoplasmic vesicle. It localises to the secretory vesicle. Its subcellular location is the synaptic vesicle membrane. It is found in the presynapse. Filament-forming cytoskeletal GTPase. May play a role in platelet secretion. Seems to participate in the process of SNARE complex formation in synaptic vesicles. This Rattus norvegicus (Rat) protein is Septin-8.